Reading from the N-terminus, the 461-residue chain is Cysteine--tRNA ligase (461 aa).

Residue Cys30 participates in Zn(2+) binding. Residues 32-42 (VTIYDLCHIGH) carry the 'HIGH' region motif. Cys211, His236, and Glu240 together coordinate Zn(2+). Residues 268 to 272 (KMSKS) carry the 'KMSKS' region motif. Lys271 lines the ATP pocket.

The protein belongs to the class-I aminoacyl-tRNA synthetase family. Monomer. The cofactor is Zn(2+).

It localises to the cytoplasm. The enzyme catalyses tRNA(Cys) + L-cysteine + ATP = L-cysteinyl-tRNA(Cys) + AMP + diphosphate. This Shewanella sp. (strain W3-18-1) protein is Cysteine--tRNA ligase.